Reading from the N-terminus, the 218-residue chain is Protein-methionine-sulfoxide reductase heme-binding subunit MsrQ (218 aa).

The next 5 membrane-spanning stretches (helical) occupy residues 14 to 34 (AVHAAVLAPIALLGWQFWQVW), 60 to 80 (LLLITLAITPLRQLTGQAVLI), 86 to 106 (LGLYAFFYASVHLTAYLWLDL), 121 to 141 (PYITVGFTAWLLLVPLAITST), and 155 to 175 (LHMLIYPIGLLAVLHFWWLVK).

This sequence belongs to the MsrQ family. Heterodimer of a catalytic subunit (MsrP) and a heme-binding subunit (MsrQ). FMN serves as cofactor. Heme b is required as a cofactor.

It is found in the cell inner membrane. Its function is as follows. Part of the MsrPQ system that repairs oxidized periplasmic proteins containing methionine sulfoxide residues (Met-O), using respiratory chain electrons. Thus protects these proteins from oxidative-stress damage caused by reactive species of oxygen and chlorine generated by the host defense mechanisms. MsrPQ is essential for the maintenance of envelope integrity under bleach stress, rescuing a wide series of structurally unrelated periplasmic proteins from methionine oxidation. MsrQ provides electrons for reduction to the reductase catalytic subunit MsrP, using the quinone pool of the respiratory chain. This chain is Protein-methionine-sulfoxide reductase heme-binding subunit MsrQ, found in Xanthomonas campestris pv. campestris (strain 8004).